Consider the following 655-residue polypeptide: p-hydroxybenzoic acid efflux pump subunit AaeB (655 aa).

The next 11 helical transmembrane spans lie at Phe-13–Leu-33, Trp-38–Pro-58, Leu-69–Ile-89, Leu-93–Val-113, Trp-121–Leu-141, Glu-152–Ile-172, Leu-370–Val-390, Phe-407–Pro-427, Gln-431–Val-451, Met-459–Phe-479, and Phe-482–Leu-502.

Belongs to the aromatic acid exporter ArAE (TC 2.A.85) family.

The protein localises to the cell inner membrane. Its function is as follows. Forms an efflux pump with AaeA. Could function as a metabolic relief valve, allowing to eliminate certain compounds when they accumulate to high levels in the cell. In Escherichia coli (strain SMS-3-5 / SECEC), this protein is p-hydroxybenzoic acid efflux pump subunit AaeB.